The primary structure comprises 458 residues: MAKTKSKFICQSCGYESPKWMGKCPGCGAWNTMVEEMIKKAPANRRAAFSHSVQTVQKPSPITSIETSEEPRVKTQLGEFNRVLGGGVVKGSLVLIGGDPGIGKSTLLLQVSAQLSGSSNSVLYISGEESVKQTKLRADRLGINNPSLHVLSETDMEYISSAIQEMNPSFVVVDSIQTVYQSDITSAPGSVSQVRECTAELMKIAKTKGIPIFIVGHVTKEGSIAGPRLLEHMVDTVLYFEGERHHTFRILRAVKNRFGSTNEMGIFEMREEGLTEVLNPSEIFLEERSAGSAGSSITASMEGTRPILVEIQALISPTSFGNPRRMATGIDHNRVSLLMAVLEKRVGLLLQNQDAYLKVAGGVKLDEPAIDLAIVISIASSFRDTPPNPADCFIGEVGLTGEVRRVSRIEQRVKEAAKLGFKRMIIPAANLDGWTKPKGIEVIGVANVAEALRTSLGG.

The C4-type zinc-finger motif lies at 10–27 (CQSCGYESPKWMGKCPGC). 98–105 (GDPGIGKS) is a binding site for ATP. The short motif at 255–259 (KNRFG) is the RadA KNRFG motif element. Positions 354–458 (DAYLKVAGGV…AEALRTSLGG (105 aa)) are lon-protease-like.

Belongs to the RecA family. RadA subfamily. Interacts with DisA.

DNA-dependent ATPase involved in processing of recombination intermediates, plays a role in repairing DNA breaks. Stimulates the branch migration of RecA-mediated strand transfer reactions, allowing the 3' invading strand to extend heteroduplex DNA faster. Binds ssDNA in the presence of ADP but not other nucleotides, has ATPase activity that is stimulated by ssDNA and various branched DNA structures, but inhibited by SSB. Does not have RecA's homology-searching function. Functionally, plays a role in DNA repair. Might stabilize or process Holliday junction intermediates. May work with DisA following methyl methanesulfonate (MMS) but not H(2)O(2) damage; DisA is a DNA integrity scanning protein with c-di-AMP synthase activity. This is DNA repair protein RadA from Bacillus subtilis (strain 168).